We begin with the raw amino-acid sequence, 487 residues long: Polyamine oxidase 4 (487 aa).

Positions 53, 61, 242, and 429 each coordinate FAD. A Microbody targeting signal motif is present at residues 485 to 487; it reads CRT.

Belongs to the flavin monoamine oxidase family. FAD is required as a cofactor. Widely expressed.

Its subcellular location is the peroxisome. It carries out the reaction spermine + O2 + H2O = 3-aminopropanal + spermidine + H2O2. It catalyses the reaction norspermine + O2 + H2O = norspermidine + 3-aminopropanal + H2O2. The enzyme catalyses thermospermine + O2 + H2O = 3-aminopropanal + spermidine + H2O2. It participates in amine and polyamine degradation; spermine degradation. In terms of biological role, flavoenzyme involved in polyamine back-conversion. Catalyzes the oxidation of the secondary amino group of polyamines, such as spermine. Substrate preference is spermine &gt; thermospermine &gt; norspermine. No activity detected when putrescine, spermidine or N(1)-acetylspermidine are used as substrates. Plays an important role in the regulation of polyamine intracellular concentration. In Oryza sativa subsp. japonica (Rice), this protein is Polyamine oxidase 4.